Reading from the N-terminus, the 371-residue chain is Germination protease (371 aa).

Residues M1–D16 constitute a propeptide that is removed on maturation.

The protein belongs to the peptidase A25 family. As to quaternary structure, homotetramer. Post-translationally, autoproteolytically processed. The inactive tetrameric zymogen termed p46 autoprocesses to a smaller form termed p41, which is active only during spore germination.

The catalysed reaction is Endopeptidase action with P4 Glu or Asp, P1 preferably Glu &gt; Asp, P1' hydrophobic and P2' Ala.. Initiates the rapid degradation of small, acid-soluble proteins during spore germination. The sequence is that of Germination protease from Bacillus pumilus (strain SAFR-032).